Reading from the N-terminus, the 1788-residue chain is Laminin subunit beta-1 (1788 aa).

The signal sequence occupies residues 1–24 (MLELRLIVVIVLALLSWQWDPVDS). The interval 23-43 (DSQRPPQHGRRDRPKYPPNKF) is disordered. The Laminin N-terminal domain maps to 50–287 (ERSSCYPATG…GISNMVVRGS (238 aa)). N-linked (GlcNAc...) asparagine glycans are attached at residues Asn-138, Asn-201, and Asn-232. Intrachain disulfides connect Cys-288-Cys-297, Cys-290-Cys-318, Cys-320-Cys-329, Cys-332-Cys-352, Cys-355-Cys-364, Cys-357-Cys-382, Cys-385-Cys-394, Cys-397-Cys-415, Cys-418-Cys-431, Cys-420-Cys-446, Cys-448-Cys-457, Cys-460-Cys-475, Cys-478-Cys-491, Cys-480-Cys-498, Cys-500-Cys-509, Cys-512-Cys-526, Cys-529-Cys-541, Cys-531-Cys-548, and Cys-550-Cys-559. Laminin EGF-like domains are found at residues 288–354 (CSCY…ACKK), 355–417 (CECN…VCQP), 418–477 (CDCD…GCEP), and 478–528 (CTCN…GCSL). N-linked (GlcNAc...) asparagine glycosylation occurs at Asn-487. In terms of domain architecture, Laminin EGF-like 5; truncated spans 529-559 (CNCDAGGSYDNYCDVISGQCRCRPHMTGRSC). A Laminin IV type B domain is found at 567 to 783 (FIPLLPEVHE…LDNILSVFVH (217 aa)). N-linked (GlcNAc...) asparagine glycosylation occurs at Asn-591. Positions 641-643 (RGD) match the Cell attachment site motif. Cystine bridges form between Cys-789/Cys-801, Cys-791/Cys-808, Cys-810/Cys-819, Cys-822/Cys-834, Cys-837/Cys-849, Cys-839/Cys-856, Cys-858/Cys-867, Cys-870/Cys-880, Cys-883/Cys-892, Cys-885/Cys-899, Cys-902/Cys-911, Cys-914/Cys-930, Cys-933/Cys-949, Cys-935/Cys-960, Cys-962/Cys-971, Cys-974/Cys-988, Cys-991/Cys-1005, Cys-993/Cys-1012, Cys-1015/Cys-1024, Cys-1027/Cys-1040, Cys-1043/Cys-1057, Cys-1045/Cys-1064, Cys-1066/Cys-1075, Cys-1078/Cys-1091, Cys-1094/Cys-1106, Cys-1096/Cys-1113, Cys-1115/Cys-1124, Cys-1127/Cys-1139, Cys-1142/Cys-1154, Cys-1144/Cys-1161, Cys-1163/Cys-1172, and Cys-1175/Cys-1186. Laminin EGF-like domains follow at residues 789–836 (CNCN…GCKA), 837–882 (CDCN…ECRV), 883–932 (CQCN…GCRP), 933–990 (CRCP…TCSK), 991–1042 (CECS…NCQQ), 1043–1093 (CECD…GCES), 1094–1141 (CNCD…KCQP), and 1142–1188 (CECD…HCSP). The N-linked (GlcNAc...) asparagine glycan is linked to Asn-1051. The tract at residues 1189–1405 (CGECFNNWDL…SQIPELNNQV (217 aa)) is domain II. Asn-1246, Asn-1301, Asn-1330, and Asn-1341 each carry an N-linked (GlcNAc...) asparagine glycan. The stretch at 1255–1405 (EKLDYETQSL…SQIPELNNQV (151 aa)) forms a coiled coil. Positions 1406 to 1432 (CGKPGDPCDSLCGGAGCGHCGGFLSCE) are domain alpha. Positions 1433 to 1788 (HGAKTHSEEA…RGSHYRQCYT (356 aa)) are domain I. The stretch at 1453-1505 (ITSKKDQADQTIRALTQAKLNASEAYEKAKRGFEQSERYLNQTNANIKLAENL) forms a coiled coil. N-linked (GlcNAc...) asparagine glycans are attached at residues Asn-1473, Asn-1493, and Asn-1515. Residues 1540 to 1561 (EEIETLGDQINRAVSSLKNVEA) adopt a coiled-coil conformation. N-linked (GlcNAc...) asparagine glycosylation is found at Asn-1581, Asn-1644, and Asn-1703. Residues 1608–1762 (QGKAKDAIQQ…QQLLRLQAEI (155 aa)) are a coiled coil. The segment at 1690–1719 (GEANNLQSATSATNQTLTDRASRSENARER) is disordered. The span at 1693–1708 (NNLQSATSATNQTLTD) shows a compositional bias: polar residues. Basic and acidic residues predominate over residues 1709–1719 (RASRSENARER).

As to quaternary structure, laminin is a complex glycoprotein, consisting of three different polypeptide chains (alpha, beta, gamma), which are bound to each other by disulfide bonds into a cross-shaped molecule comprising one long and three short arms with globules at each end. Found in the basement membranes (major component).

It localises to the secreted. Its subcellular location is the extracellular space. It is found in the extracellular matrix. The protein localises to the basement membrane. Functionally, binding to cells via a high affinity receptor, laminin is thought to mediate the attachment, migration and organization of cells into tissues during embryonic development by interacting with other extracellular matrix components. Required for Ndg localization to the basement membrane. The protein is Laminin subunit beta-1 (LanB1) of Drosophila melanogaster (Fruit fly).